The following is a 213-amino-acid chain: Probable transaldolase (213 aa).

Lys-83 acts as the Schiff-base intermediate with substrate in catalysis.

The protein belongs to the transaldolase family. Type 3B subfamily.

It localises to the cytoplasm. The enzyme catalyses D-sedoheptulose 7-phosphate + D-glyceraldehyde 3-phosphate = D-erythrose 4-phosphate + beta-D-fructose 6-phosphate. Its pathway is carbohydrate degradation; pentose phosphate pathway; D-glyceraldehyde 3-phosphate and beta-D-fructose 6-phosphate from D-ribose 5-phosphate and D-xylulose 5-phosphate (non-oxidative stage): step 2/3. In terms of biological role, transaldolase is important for the balance of metabolites in the pentose-phosphate pathway. The sequence is that of Probable transaldolase from Desulfitobacterium hafniense (strain DSM 10664 / DCB-2).